The chain runs to 241 residues: Endonuclease NucS (241 aa).

The protein belongs to the NucS endonuclease family.

It localises to the cytoplasm. Functionally, cleaves both 3' and 5' ssDNA extremities of branched DNA structures. In Corynebacterium jeikeium (strain K411), this protein is Endonuclease NucS.